The following is a 143-amino-acid chain: Putative pre-16S rRNA nuclease (143 aa).

This sequence belongs to the YqgF nuclease family.

Its subcellular location is the cytoplasm. Its function is as follows. Could be a nuclease involved in processing of the 5'-end of pre-16S rRNA. In Agathobacter rectalis (strain ATCC 33656 / DSM 3377 / JCM 17463 / KCTC 5835 / VPI 0990) (Eubacterium rectale), this protein is Putative pre-16S rRNA nuclease.